The chain runs to 254 residues: Hydroxyacylglutathione hydrolase (254 aa).

Histidine 52, histidine 54, aspartate 56, histidine 57, histidine 109, aspartate 126, and histidine 164 together coordinate Zn(2+).

It belongs to the metallo-beta-lactamase superfamily. Glyoxalase II family. In terms of assembly, monomer. The cofactor is Zn(2+).

It catalyses the reaction an S-(2-hydroxyacyl)glutathione + H2O = a 2-hydroxy carboxylate + glutathione + H(+). It participates in secondary metabolite metabolism; methylglyoxal degradation; (R)-lactate from methylglyoxal: step 2/2. Functionally, thiolesterase that catalyzes the hydrolysis of S-D-lactoyl-glutathione to form glutathione and D-lactic acid. The polypeptide is Hydroxyacylglutathione hydrolase (Stenotrophomonas maltophilia (strain R551-3)).